Here is a 332-residue protein sequence, read N- to C-terminus: Holliday junction branch migration complex subunit RuvB (332 aa).

The segment at M1 to Y181 is large ATPase domain (RuvB-L). Residues L20, R21, G62, K65, T66, T67, E128–F130, R171, Y181, and R218 each bind ATP. T66 contributes to the Mg(2+) binding site. The segment at A182–D252 is small ATPAse domain (RuvB-S). The interval H255–K332 is head domain (RuvB-H). DNA-binding residues include R291, R310, R312, and R315.

This sequence belongs to the RuvB family. In terms of assembly, homohexamer. Forms an RuvA(8)-RuvB(12)-Holliday junction (HJ) complex. HJ DNA is sandwiched between 2 RuvA tetramers; dsDNA enters through RuvA and exits via RuvB. An RuvB hexamer assembles on each DNA strand where it exits the tetramer. Each RuvB hexamer is contacted by two RuvA subunits (via domain III) on 2 adjacent RuvB subunits; this complex drives branch migration. In the full resolvosome a probable DNA-RuvA(4)-RuvB(12)-RuvC(2) complex forms which resolves the HJ.

The protein resides in the cytoplasm. It carries out the reaction ATP + H2O = ADP + phosphate + H(+). Functionally, the RuvA-RuvB-RuvC complex processes Holliday junction (HJ) DNA during genetic recombination and DNA repair, while the RuvA-RuvB complex plays an important role in the rescue of blocked DNA replication forks via replication fork reversal (RFR). RuvA specifically binds to HJ cruciform DNA, conferring on it an open structure. The RuvB hexamer acts as an ATP-dependent pump, pulling dsDNA into and through the RuvAB complex. RuvB forms 2 homohexamers on either side of HJ DNA bound by 1 or 2 RuvA tetramers; 4 subunits per hexamer contact DNA at a time. Coordinated motions by a converter formed by DNA-disengaged RuvB subunits stimulates ATP hydrolysis and nucleotide exchange. Immobilization of the converter enables RuvB to convert the ATP-contained energy into a lever motion, pulling 2 nucleotides of DNA out of the RuvA tetramer per ATP hydrolyzed, thus driving DNA branch migration. The RuvB motors rotate together with the DNA substrate, which together with the progressing nucleotide cycle form the mechanistic basis for DNA recombination by continuous HJ branch migration. Branch migration allows RuvC to scan DNA until it finds its consensus sequence, where it cleaves and resolves cruciform DNA. This chain is Holliday junction branch migration complex subunit RuvB, found in Streptococcus pneumoniae serotype 2 (strain D39 / NCTC 7466).